A 957-amino-acid chain; its full sequence is ERC protein 2 (957 aa).

Polar residues predominate over residues 1–13; it reads MYGSARTISNPEG. The tract at residues 1-44 is disordered; that stretch reads MYGSARTISNPEGSPSRSPRLPRSPRLGHRRTSSGGGGGTGKTL. The segment covering 14 to 25 has biased composition (low complexity); sequence SPSRSPRLPRSP. Phosphoserine is present on residues Ser-65 and Ser-666. Positions 140–917 form a coiled coil; sequence RQVRDSTMLD…RMKLMADNYD (778 aa). The involved in binding to RIMS1 stretch occupies residues 760–957; it reads DQNKKVANLK…DQDDEEGIWA (198 aa). Residues 918 to 957 are disordered; that stretch reads DDHHHYHHHHHHHHHRSPGRSQHSNHRPSPDQDDEEGIWA. Positions 922-943 are enriched in basic residues; it reads HYHHHHHHHHHRSPGRSQHSNH. Over residues 948–957 the composition is skewed to acidic residues; the sequence is DQDDEEGIWA.

Interacts with BSN, ERC1, PPFIA1, PPFIA2, PPFIA3 and PPFIA4. Interacts through its C-terminus with the PDZ domain of RIMS1. Part of a complex consisting of ERC2, RIMS1 and UNC13A. As to expression, predominantly expressed in brain, including hippocampus, cortex, cerebellum, amygdala and olfactory bulb.

The protein localises to the cytoplasm. It localises to the synapse. The protein resides in the presynaptic active zone. Its subcellular location is the cytoskeleton. Thought to be involved in the organization of the cytomatrix at the nerve terminals active zone (CAZ) which regulates neurotransmitter release. Seems to act together with BSN. May recruit liprin-alpha proteins to the CAZ. The protein is ERC protein 2 (Erc2) of Rattus norvegicus (Rat).